The chain runs to 124 residues: Small ribosomal subunit protein uS12 (124 aa).

Asp-89 carries the post-translational modification 3-methylthioaspartic acid. The segment at 104-124 (SAGVQNRNRGRSKYGTKRPKK) is disordered. Residues 111–124 (NRGRSKYGTKRPKK) show a composition bias toward basic residues.

The protein belongs to the universal ribosomal protein uS12 family. In terms of assembly, part of the 30S ribosomal subunit. Contacts proteins S8 and S17. May interact with IF1 in the 30S initiation complex.

With S4 and S5 plays an important role in translational accuracy. In terms of biological role, interacts with and stabilizes bases of the 16S rRNA that are involved in tRNA selection in the A site and with the mRNA backbone. Located at the interface of the 30S and 50S subunits, it traverses the body of the 30S subunit contacting proteins on the other side and probably holding the rRNA structure together. The combined cluster of proteins S8, S12 and S17 appears to hold together the shoulder and platform of the 30S subunit. The sequence is that of Small ribosomal subunit protein uS12 from Pelotomaculum thermopropionicum (strain DSM 13744 / JCM 10971 / SI).